The sequence spans 96 residues: Small ribosomal subunit protein uS19 (96 aa).

This sequence belongs to the universal ribosomal protein uS19 family.

In terms of biological role, protein S19 forms a complex with S13 that binds strongly to the 16S ribosomal RNA. The sequence is that of Small ribosomal subunit protein uS19 from Gemmatimonas aurantiaca (strain DSM 14586 / JCM 11422 / NBRC 100505 / T-27).